The primary structure comprises 470 residues: Probable citrate synthase, mitochondrial (470 aa).

Residues H297, H351, and D406 contribute to the active site.

Belongs to the citrate synthase family. As to quaternary structure, homodimer.

It is found in the mitochondrion matrix. It carries out the reaction oxaloacetate + acetyl-CoA + H2O = citrate + CoA + H(+). It participates in carbohydrate metabolism; tricarboxylic acid cycle; isocitrate from oxaloacetate: step 1/2. This chain is Probable citrate synthase, mitochondrial, found in Leishmania major.